A 1413-amino-acid chain; its full sequence is DNA-directed RNA polymerase subunit beta' (1413 aa).

The Zn(2+) site is built by cysteine 70, cysteine 72, cysteine 85, and cysteine 88. Aspartate 460, aspartate 462, and aspartate 464 together coordinate Mg(2+). Positions 819, 893, 900, and 903 each coordinate Zn(2+). Residues 1392–1413 (EEAFDFGTPSAPAEEPQHPAAE) form a disordered region.

The protein belongs to the RNA polymerase beta' chain family. As to quaternary structure, the RNAP catalytic core consists of 2 alpha, 1 beta, 1 beta' and 1 omega subunit. When a sigma factor is associated with the core the holoenzyme is formed, which can initiate transcription. It depends on Mg(2+) as a cofactor. Zn(2+) is required as a cofactor.

The enzyme catalyses RNA(n) + a ribonucleoside 5'-triphosphate = RNA(n+1) + diphosphate. DNA-dependent RNA polymerase catalyzes the transcription of DNA into RNA using the four ribonucleoside triphosphates as substrates. This Burkholderia orbicola (strain MC0-3) protein is DNA-directed RNA polymerase subunit beta'.